The sequence spans 469 residues: Adenosylhomocysteinase (469 aa).

Residues T63, D139, and E164 each contribute to the substrate site. 165–167 lines the NAD(+) pocket; sequence TTT. Positions 194 and 198 each coordinate substrate. NAD(+) is bound by residues N199, 228–233, E251, N300, 321–323, and N375; these read GYGDVG and IGH.

Belongs to the adenosylhomocysteinase family. Requires NAD(+) as cofactor.

The protein resides in the cytoplasm. The catalysed reaction is S-adenosyl-L-homocysteine + H2O = L-homocysteine + adenosine. It participates in amino-acid biosynthesis; L-homocysteine biosynthesis; L-homocysteine from S-adenosyl-L-homocysteine: step 1/1. May play a key role in the regulation of the intracellular concentration of adenosylhomocysteine. In Pseudomonas putida (strain ATCC 700007 / DSM 6899 / JCM 31910 / BCRC 17059 / LMG 24140 / F1), this protein is Adenosylhomocysteinase.